Here is a 125-residue protein sequence, read N- to C-terminus: Small ribosomal subunit protein uS13 (125 aa).

The interval Arg-92–Lys-125 is disordered. Residues Arg-107–Lys-125 show a composition bias toward basic residues.

This sequence belongs to the universal ribosomal protein uS13 family. In terms of assembly, part of the 30S ribosomal subunit. Forms a loose heterodimer with protein S19. Forms two bridges to the 50S subunit in the 70S ribosome.

Functionally, located at the top of the head of the 30S subunit, it contacts several helices of the 16S rRNA. In the 70S ribosome it contacts the 23S rRNA (bridge B1a) and protein L5 of the 50S subunit (bridge B1b), connecting the 2 subunits; these bridges are implicated in subunit movement. Contacts the tRNAs in the A and P-sites. This chain is Small ribosomal subunit protein uS13, found in Chlorobium phaeobacteroides (strain BS1).